We begin with the raw amino-acid sequence, 83 residues long: Molybdopterin synthase sulfur carrier subunit (83 aa).

The protein belongs to the MoaD family.

The protein operates within cofactor biosynthesis; molybdopterin biosynthesis. In terms of biological role, involved in sulfur transfer in the conversion of molybdopterin precursor Z to molybdopterin. Probably plays a role in host phagosome maturation arrest. This is Molybdopterin synthase sulfur carrier subunit (moaD1) from Mycobacterium tuberculosis (strain ATCC 25618 / H37Rv).